The primary structure comprises 159 residues: Putative ribosomal RNA large subunit methyltransferase H (159 aa).

Residues L76, G108, and 127–132 contribute to the S-adenosyl-L-methionine site; that span reads LSPLTF.

It belongs to the RNA methyltransferase RlmH family.

The protein localises to the cytoplasm. It carries out the reaction pseudouridine(1915) in 23S rRNA + S-adenosyl-L-methionine = N(3)-methylpseudouridine(1915) in 23S rRNA + S-adenosyl-L-homocysteine + H(+). Its function is as follows. Specifically methylates the pseudouridine at position 1915 (m3Psi1915) in 23S rRNA. The polypeptide is Putative ribosomal RNA large subunit methyltransferase H (Methanoregula boonei (strain DSM 21154 / JCM 14090 / 6A8)).